The primary structure comprises 238 residues: Ribosomal RNA small subunit methyltransferase G (238 aa).

Residues glycine 78, phenylalanine 83, 129-130 (AE), and arginine 148 contribute to the S-adenosyl-L-methionine site. The disordered stretch occupies residues 216–238 (EKKKETPKKYPRKAGTPAKNPIK).

Belongs to the methyltransferase superfamily. RNA methyltransferase RsmG family.

It localises to the cytoplasm. Its function is as follows. Specifically methylates the N7 position of a guanine in 16S rRNA. This chain is Ribosomal RNA small subunit methyltransferase G, found in Lactococcus lactis subsp. lactis (strain IL1403) (Streptococcus lactis).